The sequence spans 375 residues: Growth/differentiation factor 8 (375 aa).

The signal sequence occupies residues 1–18 (MQKLQISVYIYLFVLILA). Residues 19-266 (GPVDLNENSE…VTDTPKRSRR (248 aa)) constitute a propeptide that is removed on maturation. A glycan (N-linked (GlcNAc...) asparagine) is linked at N71. Intrachain disulfides connect C272-C282, C281-C340, C309-C372, and C313-C374.

The protein belongs to the TGF-beta family. Homodimer; disulfide-linked. Interacts with WFIKKN2, leading to inhibit its activity. Interacts with FSTL3. Post-translationally, synthesized as large precursor molecule that undergoes proteolytic cleavage to generate an N-terminal propeptide and a disulfide linked C-terminal dimer, which is the biologically active molecule. The circulating form consists of a latent complex of the C-terminal dimer and other proteins, including its propeptide, which maintain the C-terminal dimer in a latent, inactive state. Ligand activation requires additional cleavage of the prodomain by a tolloid-like metalloproteinase.

Its subcellular location is the secreted. Functionally, acts specifically as a negative regulator of skeletal muscle growth. This Equus caballus (Horse) protein is Growth/differentiation factor 8 (MSTN).